A 513-amino-acid polypeptide reads, in one-letter code: Histidine ammonia-lyase (513 aa).

A cross-link (5-imidazolinone (Ala-Gly)) is located at residues 144 to 146 (ASG). Ser-145 bears the 2,3-didehydroalanine (Ser) mark.

This sequence belongs to the PAL/histidase family. Post-translationally, contains an active site 4-methylidene-imidazol-5-one (MIO), which is formed autocatalytically by cyclization and dehydration of residues Ala-Ser-Gly.

The protein resides in the cytoplasm. It carries out the reaction L-histidine = trans-urocanate + NH4(+). The protein operates within amino-acid degradation; L-histidine degradation into L-glutamate; N-formimidoyl-L-glutamate from L-histidine: step 1/3. In Streptococcus pyogenes serotype M6 (strain ATCC BAA-946 / MGAS10394), this protein is Histidine ammonia-lyase.